The primary structure comprises 610 residues: UvrABC system protein C (610 aa).

Residues 16-94 (SQPGVYRMYD…IKLYQPRYNV (79 aa)) form the GIY-YIG domain. Residues 204 to 239 (DQVLTQLIARMEKASQDLAFEEAARIRDQIQAVRRV) enclose the UVR domain.

Belongs to the UvrC family. As to quaternary structure, interacts with UvrB in an incision complex.

The protein localises to the cytoplasm. The UvrABC repair system catalyzes the recognition and processing of DNA lesions. UvrC both incises the 5' and 3' sides of the lesion. The N-terminal half is responsible for the 3' incision and the C-terminal half is responsible for the 5' incision. This chain is UvrABC system protein C, found in Salmonella dublin (strain CT_02021853).